The primary structure comprises 378 residues: Ferredoxin--NADP reductase, embryo isozyme, chloroplastic (378 aa).

The transit peptide at 1–62 (MASALGAQAS…SRHMNKIFSM (62 aa)) directs the protein to the chloroplast. Residues 93-221 (KEPYTATIVS…TGPSGKIMLL (129 aa)) form the FAD-binding FR-type domain. Residues 153–156 (RLYS), 174–176 (CVR), Tyr-180, 195–197 (ICS), and Thr-237 contribute to the FAD site. NADP(+)-binding residues include Ser-156 and Arg-176. Residues Thr-237, 269-270 (VA), 299-300 (SR), Lys-309, 337-338 (GL), and Glu-376 contribute to the NADP(+) site.

It belongs to the ferredoxin--NADP reductase type 1 family. FAD serves as cofactor.

The protein resides in the plastid. Its subcellular location is the chloroplast. It catalyses the reaction 2 reduced [2Fe-2S]-[ferredoxin] + NADP(+) + H(+) = 2 oxidized [2Fe-2S]-[ferredoxin] + NADPH. It functions in the pathway energy metabolism; photosynthesis. In terms of biological role, may play a key role in regulating the relative amounts of cyclic and non-cyclic electron flow to meet the demands of the plant for ATP and reducing power. Is involved in nitrate assimilation. The sequence is that of Ferredoxin--NADP reductase, embryo isozyme, chloroplastic from Oryza sativa subsp. japonica (Rice).